A 409-amino-acid chain; its full sequence is DNA primase DnaG (409 aa).

A Toprim domain is found at 175 to 261 (DAIIVVEGRA…EVEELTRKEI (87 aa)). Glu-181, Asp-223, and Asp-225 together coordinate Mg(2+). A compositionally biased stretch (basic and acidic residues) spans 280–289 (ERPKDKEREK). The disordered stretch occupies residues 280-322 (ERPKDKEREKGKKPKPKKRPERRGRPRKKKARPKRGPQERRLL). Over residues 290 to 314 (GKKPKPKKRPERRGRPRKKKARPKR) the composition is skewed to basic residues.

Belongs to the archaeal DnaG primase family. In terms of assembly, forms a ternary complex with MCM helicase and DNA. Component of the archaeal exosome complex. Mg(2+) is required as a cofactor.

It catalyses the reaction ssDNA + n NTP = ssDNA/pppN(pN)n-1 hybrid + (n-1) diphosphate.. Its function is as follows. RNA polymerase that catalyzes the synthesis of short RNA molecules used as primers for DNA polymerase during DNA replication. Also part of the exosome, which is a complex involved in RNA degradation. Acts as a poly(A)-binding protein that enhances the interaction between heteromeric, adenine-rich transcripts and the exosome. The chain is DNA primase DnaG from Methanopyrus kandleri (strain AV19 / DSM 6324 / JCM 9639 / NBRC 100938).